A 125-amino-acid polypeptide reads, in one-letter code: Fluoride-specific ion channel FluC (125 aa).

3 helical membrane passes run 36–56 (GTIF…FLSI), 65–85 (FILF…TFAY), and 99–119 (IIYF…GMFL). The Na(+) site is built by G75 and T78.

Belongs to the fluoride channel Fluc/FEX (TC 1.A.43) family.

The protein localises to the cell inner membrane. The catalysed reaction is fluoride(in) = fluoride(out). With respect to regulation, na(+) is not transported, but it plays an essential structural role and its presence is essential for fluoride channel function. Fluoride-specific ion channel. Important for reducing fluoride concentration in the cell, thus reducing its toxicity. The polypeptide is Fluoride-specific ion channel FluC (Thermosipho africanus (strain TCF52B)).